We begin with the raw amino-acid sequence, 338 residues long: Putative peptide import ATP-binding protein BMEII0863 (338 aa).

Residues 10–263 enclose the ABC transporter domain; that stretch reads KGLRTVFRTR…PRHPYTMGLL (254 aa). 43-50 is an ATP binding site; sequence GESGSGKS.

It belongs to the ABC transporter superfamily. In terms of assembly, the complex is composed of two ATP-binding proteins (BMEII0863 and BMEII0864), two transmembrane proteins (BMEII0860 and BMEII0861) and a solute-binding protein (BMEII0859).

It is found in the cell inner membrane. Functionally, probably part of an ABC transporter complex that could be involved in peptide import. Probably responsible for energy coupling to the transport system. The protein is Putative peptide import ATP-binding protein BMEII0863 of Brucella melitensis biotype 1 (strain ATCC 23456 / CCUG 17765 / NCTC 10094 / 16M).